We begin with the raw amino-acid sequence, 266 residues long: Putative carbamate hydrolase RutD (266 aa).

The region spanning 15-239 (PVVVLSAGLG…RVEMPWGGHA (225 aa)) is the AB hydrolase-1 domain.

It belongs to the AB hydrolase superfamily. Hydrolase RutD family.

It carries out the reaction carbamate + 2 H(+) = NH4(+) + CO2. In terms of biological role, involved in pyrimidine catabolism. May facilitate the hydrolysis of carbamate, a reaction that can also occur spontaneously. The polypeptide is Putative carbamate hydrolase RutD (Klebsiella variicola (strain At-22)).